A 374-amino-acid polypeptide reads, in one-letter code: Putative glutamate--cysteine ligase 2 (374 aa).

Belongs to the glutamate--cysteine ligase type 2 family. YbdK subfamily.

The catalysed reaction is L-cysteine + L-glutamate + ATP = gamma-L-glutamyl-L-cysteine + ADP + phosphate + H(+). ATP-dependent carboxylate-amine ligase which exhibits weak glutamate--cysteine ligase activity. The sequence is that of Putative glutamate--cysteine ligase 2 from Leptothrix cholodnii (strain ATCC 51168 / LMG 8142 / SP-6) (Leptothrix discophora (strain SP-6)).